The sequence spans 85 residues: MSDVNIRLECLRPAERWVQPTGAEIREVLHLAGLTGGQAARILGLGAKGDRTVRRWVGEDSPIPYAAWAILCDLAGIGAIWKGQG.

The H-T-H motif DNA-binding region spans 28–47; that stretch reads VLHLAGLTGGQAARILGLGA.

Functionally, acts with KorA as corepressor in the control of the kilC and kilE operons. This is Transcriptional repressor protein KorC (korC) from Escherichia coli.